The primary structure comprises 883 residues: DNA double-strand break repair Rad50 ATPase (883 aa).

ATP-binding positions include K12, 32 to 38, and Q137; that span reads NGSGKSS. The stretch at 244 to 283 forms a coiled coil; it reads ERYEESRTALADVEETIADVREAVAEAERERETLADRVSD. 2 disordered regions span residues 271–290 and 305–326; these read ERER…RASD and DDPD…REAV. The segment covering 313-326 has biased composition (basic and acidic residues); sequence SAERDAVADQREAV. Coiled-coil stretches lie at residues 336–389 and 414–452; these read AVSR…IEAL and LDDA…LDEG. Positions 407–506 constitute a Zinc-hook domain; that stretch reads FGAAEAFLDD…RVDRGESLVA (100 aa). Zn(2+)-binding residues include C454 and C457. The tract at residues 508-565 is disordered; the sequence is EDRVDDLEQQRERAVERRDEQADIADAKRDQAAEKRDRAADLDAEAEDARADAAAKRD. Coiled coils occupy residues 571-604 and 668-720; these read RETL…AADA and KLQA…VTAL.

The protein belongs to the SMC family. RAD50 subfamily. In terms of assembly, homodimer. Forms a heterotetramer composed of two Mre11 subunits and two Rad50 subunits. It depends on Zn(2+) as a cofactor.

Part of the Rad50/Mre11 complex, which is involved in the early steps of DNA double-strand break (DSB) repair. Rad50 controls the balance between DNA end bridging and DNA resection via ATP-dependent structural rearrangements of the Rad50/Mre11 complex. This is DNA double-strand break repair Rad50 ATPase from Halobacterium salinarum (strain ATCC 700922 / JCM 11081 / NRC-1) (Halobacterium halobium).